The primary structure comprises 204 residues: Urease accessory protein UreG (204 aa).

11 to 18 is a binding site for GTP; sequence GPVGAGKT.

Belongs to the SIMIBI class G3E GTPase family. UreG subfamily. Homodimer. UreD, UreF and UreG form a complex that acts as a GTP-hydrolysis-dependent molecular chaperone, activating the urease apoprotein by helping to assemble the nickel containing metallocenter of UreC. The UreE protein probably delivers the nickel.

Its subcellular location is the cytoplasm. Functionally, facilitates the functional incorporation of the urease nickel metallocenter. This process requires GTP hydrolysis, probably effectuated by UreG. This Staphylococcus aureus (strain bovine RF122 / ET3-1) protein is Urease accessory protein UreG.